Consider the following 331-residue polypeptide: MEANREKYAADILSIKEAHDRIKPYIHRTPVLTSESLNSISGRSLFFKCECLQKGGAFKFRGACNAVLSLDAEQAAKGVVTHSSGNHAAALSLAAKIQGIPAYIVVPKGAPKCKVDNVIRYGGKVIWSEATMSSREEIASKVLQETGSVLIHPYNDGRIISGQGTIALELLEQIQEIDAIVVPISGGGLISGVALAAKSIKPSIRIIAAEPKGADDAAQSKVAGKIITLPVTNTIADGLRASLGDLTWPVVRDLVDDVVTLEECEIIEAMKMCYEILKVSVEPSGAIGLAAVLSNSFRNNPSCRDCKNIGIVLSGGNVDLGSLWDSFKSSK.

Residues Ser34 and Lys54 each coordinate ATP. Lys59 functions as the Proton acceptor in the catalytic mechanism. The residue at position 59 (Lys59) is an N6-(pyridoxal phosphate)lysine. Thr81 provides a ligand contact to Ca(2+). The active-site Proton acceptor is Ser84. Asn86 contributes to the pyridoxal 5'-phosphate binding site. Tyr121 is an ATP binding site. Position 178 (Asp178) interacts with Mg(2+). Positions 186, 187, and 188 each coordinate pyridoxal 5'-phosphate. Residues Glu210, Ala214, and Asp216 each coordinate Ca(2+). 3 residues coordinate Mg(2+): Glu210, Ala214, and Asp216. Mn(2+) is bound by residues Glu210, Ala214, and Asp216. Lys278 is a binding site for ATP. Position 314 (Ser314) interacts with pyridoxal 5'-phosphate. Residue Asn317 coordinates ATP.

This sequence belongs to the serine/threonine dehydratase family. As to quaternary structure, homodimer. Requires Mg(2+) as cofactor. Mn(2+) is required as a cofactor. The cofactor is Ca(2+). It depends on pyridoxal 5'-phosphate as a cofactor. As to expression, expressed in the whole plant.

It catalyses the reaction L-serine = D-serine. The catalysed reaction is L-serine = pyruvate + NH4(+). The enzyme catalyses D-serine = pyruvate + NH4(+). Inhibited by hydroxylamine. Racemase activity is enhanced by Ca(2+), Mg(2+), Mn(2+), and is decreased by Ni(2+), Zn(2+). Hydratase activity is enhanced by Ca(2+), Mg(2+), Mn(2+), Cu(2+), Fe(2+), Ni(2+). Functionally, catalyzes the synthesis of D-serine from L-serine. Has dehydratase activity towards both L-serine and D-serine. Displays high substrate specificity for L-serine, whereas L-alanine, L-arginine, and L-glutamine were poor substrates. The protein is Serine racemase (SR) of Arabidopsis thaliana (Mouse-ear cress).